Consider the following 78-residue polypeptide: Large ribosomal subunit protein bL28 (78 aa).

It belongs to the bacterial ribosomal protein bL28 family.

This Methylococcus capsulatus (strain ATCC 33009 / NCIMB 11132 / Bath) protein is Large ribosomal subunit protein bL28.